A 270-amino-acid chain; its full sequence is uncharacterized protein (270 aa).

A divalent metal cation is bound by residues Asp53, His55, Asp83, Asn116, His207, and His209.

Belongs to the metallophosphoesterase superfamily. A divalent metal cation serves as cofactor.

This is an uncharacterized protein from Bacillus subtilis (strain 168).